The following is a 382-amino-acid chain: Putative 12-oxophytodienoate reductase 3 (382 aa).

Residues Pro-37–Thr-39, Ala-70, and Gln-112 each bind FMN. The segment covering Ser-120 to Gln-138 has biased composition (polar residues). The disordered stretch occupies residues Ser-120–Val-147. His-184–His-187 is a substrate binding site. Tyr-189 functions as the Proton donor in the catalytic mechanism. FMN is bound at residue Arg-236. Arg-277 contacts substrate. Residues Gly-307 and Gly-328–Arg-329 contribute to the FMN site.

This sequence belongs to the NADH:flavin oxidoreductase/NADH oxidase family. FMN is required as a cofactor.

In terms of biological role, putative oxophytodienoate reductase that may be involved in the biosynthesis or metabolism of oxylipin signaling molecules. This chain is Putative 12-oxophytodienoate reductase 3 (OPR3), found in Oryza sativa subsp. japonica (Rice).